The following is a 237-amino-acid chain: UPF0502 protein RB6530 (237 aa).

A compositionally biased stretch (polar residues) spans 187–202 (ASSAAPSQAESGSTSP). Positions 187–211 (ASSAAPSQAESGSTSPAKAANDDRI) are disordered.

The protein belongs to the UPF0502 family.

The protein is UPF0502 protein RB6530 of Rhodopirellula baltica (strain DSM 10527 / NCIMB 13988 / SH1).